The sequence spans 234 residues: Proteasome subunit alpha type-2 (234 aa).

Position 2 is an N-acetylalanine (alanine 2). Phosphotyrosine is present on tyrosine 121.

It belongs to the peptidase T1A family. As to quaternary structure, the 26S proteasome consists of a 20S proteasome core and two 19S regulatory subunits. The 20S proteasome core is a barrel-shaped complex made of 28 subunits that are arranged in four stacked rings. The two outer rings are each formed by seven alpha subunits, and the two inner rings are formed by seven beta subunits. The proteolytic activity is exerted by three beta-subunits PSMB5, PSMB6 and PSMB7.

The protein localises to the cytoplasm. Its subcellular location is the nucleus. Functionally, component of the 20S core proteasome complex involved in the proteolytic degradation of most intracellular proteins. This complex plays numerous essential roles within the cell by associating with different regulatory particles. Associated with two 19S regulatory particles, forms the 26S proteasome and thus participates in the ATP-dependent degradation of ubiquitinated proteins. The 26S proteasome plays a key role in the maintenance of protein homeostasis by removing misfolded or damaged proteins that could impair cellular functions, and by removing proteins whose functions are no longer required. Associated with the PA200 or PA28, the 20S proteasome mediates ubiquitin-independent protein degradation. This type of proteolysis is required in several pathways including spermatogenesis (20S-PA200 complex) or generation of a subset of MHC class I-presented antigenic peptides (20S-PA28 complex). In Xenopus laevis (African clawed frog), this protein is Proteasome subunit alpha type-2 (psma2).